We begin with the raw amino-acid sequence, 292 residues long: Cyclin-dependent-like kinase 5 (292 aa).

The region spanning 4 to 286 (YDKMEKIGEG…ADAALRHAYF (283 aa)) is the Protein kinase domain. ATP is bound by residues 10–18 (IGEGTYGTV) and K33. The Proton acceptor role is filled by D126. Residues N131 and D144 each coordinate Mg(2+).

The protein belongs to the protein kinase superfamily. CMGC Ser/Thr protein kinase family. CDC2/CDKX subfamily. In terms of assembly, heterodimer composed of a catalytic subunit cdk-5 and a regulatory subunit cdka-1. Interaction with cdka-1 is required for cdk-5 activation. Mg(2+) is required as a cofactor.

It is found in the cytoplasm. The protein resides in the cell projection. Its subcellular location is the dendrite. The catalysed reaction is L-seryl-[protein] + ATP = O-phospho-L-seryl-[protein] + ADP + H(+). It carries out the reaction L-threonyl-[protein] + ATP = O-phospho-L-threonyl-[protein] + ADP + H(+). Proline-directed serine/threonine-protein kinase which, in several motor neurons, promotes the polarized trafficking of synaptic vesicles and dense-core vesicles (DCV). In the ventral nerve cord, phosphorylates lin-10 and thereby prevents lin-10-mediated anterograde trafficking of the glutamate receptor glr-1. Involved in the inhibition of glr-1 trafficking in hypoxic conditions. In DA motor neurons but not in DB motor neurons, regulates axonal transport of synaptic vesicle precursors by inhibiting dynein-mediated retrograde transport. Regulates the trafficking of dense-core vesicles in DA and DB motor neurons by promoting anterograde trafficking to the axon and preventing dynein-dependent trafficking to the dendrite. May regulate these processes in association with cdka-1/p35. Activity may be regulated by cyy-1. Involved in synapse formation during DD motor neuron remodeling by regulating transport of disassembled synaptic material to the new synaptic sites probably by activating the motor protein unc-104/kinesin-3. Regulates microtubule polarity in the dendrite of DB motor neurons. May also play a role in GABAergic synaptic vesicle localization in the ventral nerve cord. The chain is Cyclin-dependent-like kinase 5 from Caenorhabditis elegans.